A 272-amino-acid polypeptide reads, in one-letter code: 2-amino-3,7-dideoxy-D-threo-hept-6-ulosonate synthase (272 aa).

Asp-33 serves as the catalytic Proton acceptor. 1-deoxy-D-threo-hexo-2,5-diulose 6-phosphate-binding positions include 33-37 (DHGVS) and 153-155 (YPR). Catalysis depends on Tyr-153, which acts as the Proton donor. The active-site Schiff-base intermediate with substrate is the Lys-184. 1-deoxy-D-threo-hexo-2,5-diulose 6-phosphate contacts are provided by residues 209-210 (GG) and 237-238 (GR).

The protein belongs to the DeoC/FbaB aldolase family. ADHS subfamily. Homodecamer.

It carries out the reaction 1-deoxy-D-threo-hexo-2,5-diulose 6-phosphate + L-aspartate 4-semialdehyde = 2,3-dioxopropyl phosphate + 2-amino-2,3,7-trideoxy-D-lyxo-hept-6-ulosonate. In terms of biological role, catalyzes a transaldol reaction between 6-deoxy-5-ketofructose 1-phosphate (DKFP) and L-aspartate semialdehyde (ASA) with an elimination of hydroxypyruvaldehyde phosphate to yield 2-amino-3,7-dideoxy-D-threo-hept-6-ulosonate (ADH). Plays a key role in an alternative pathway of the biosynthesis of 3-dehydroquinate (DHQ), which is involved in the canonical pathway for the biosynthesis of aromatic amino acids. The chain is 2-amino-3,7-dideoxy-D-threo-hept-6-ulosonate synthase from Methanococcus vannielii (strain ATCC 35089 / DSM 1224 / JCM 13029 / OCM 148 / SB).